The chain runs to 205 residues: Ribonuclease HII (205 aa).

In terms of domain architecture, RNase H type-2 spans 14-201; that stretch reads EIIAGVDEAG…KGNINHSAIL (188 aa). 3 residues coordinate a divalent metal cation: Asp20, Glu21, and Asp111.

It belongs to the RNase HII family. Requires Mn(2+) as cofactor. The cofactor is Mg(2+).

It is found in the cytoplasm. It catalyses the reaction Endonucleolytic cleavage to 5'-phosphomonoester.. Functionally, endonuclease that specifically degrades the RNA of RNA-DNA hybrids. The protein is Ribonuclease HII of Orientia tsutsugamushi (strain Ikeda) (Rickettsia tsutsugamushi).